Consider the following 66-residue polypeptide: Ocellatin-PT1 (66 aa).

The N-terminal stretch at 1-22 (MAFLKKSLFLVLFLGLVSLSIC) is a signal peptide. Positions 23 to 39 (DEEKRQDEDDDDDDDEE) are excised as a propeptide. At V66 the chain carries Valine amide.

In terms of tissue distribution, expressed by the skin glands.

The protein localises to the secreted. Its function is as follows. Has antibacterial activity against Gram-negative bacterium E.coli ATCC 25922 (MIC=300 uM) but not against S.pneumoniae ATCC 700603, S.choleraesuis ATCC 14028 or Gram-positive bacterium S.aureus ATCC 29313. Shows virtually no hemolytic activity and no cytotoxicity. This chain is Ocellatin-PT1, found in Leptodactylus pustulatus (Ceara white-lipped frog).